Reading from the N-terminus, the 314-residue chain is Malate dehydrogenase (314 aa).

Residues 7-13 (GAAGGIG) and Asp34 each bind NAD(+). Arg81 and Arg87 together coordinate substrate. Residues Asn94 and 117–119 (ITN) contribute to the NAD(+) site. The substrate site is built by Asn119 and Arg153. Residue His177 is the Proton acceptor of the active site. Met230 is an NAD(+) binding site.

The protein belongs to the LDH/MDH superfamily. MDH type 1 family. As to quaternary structure, homodimer.

The catalysed reaction is (S)-malate + NAD(+) = oxaloacetate + NADH + H(+). Its function is as follows. Catalyzes the reversible oxidation of malate to oxaloacetate. The chain is Malate dehydrogenase from Glaesserella parasuis serovar 5 (strain SH0165) (Haemophilus parasuis).